A 165-amino-acid chain; its full sequence is Protoporphyrinogen IX oxidase (165 aa).

Helical transmembrane passes span 26–46 (LHVI…RLFV), 77–97 (AMIA…IVDW), 99–119 (MLWP…HMWL), and 145–165 (PTLL…YWGF). Histidine 27 contributes to the heme binding site. Lysine 105 is a heme binding site.

This sequence belongs to the HemJ family. As to quaternary structure, homodimer. The cofactor is heme b.

The protein localises to the cell membrane. It carries out the reaction protoporphyrinogen IX + 3 A = protoporphyrin IX + 3 AH2. Its pathway is porphyrin-containing compound metabolism; protoporphyrin-IX biosynthesis; protoporphyrin-IX from protoporphyrinogen-IX: step 1/1. In terms of biological role, catalyzes the oxidation of protoporphyrinogen IX to protoporphyrin IX. Is involved in the biosynthesis of tetrapyrrole molecules like heme and chlorophyll. Does not use oxygen or artificial electron acceptors such as menadione or benzoquinone. In Cereibacter sphaeroides (strain ATCC 17023 / DSM 158 / JCM 6121 / CCUG 31486 / LMG 2827 / NBRC 12203 / NCIMB 8253 / ATH 2.4.1.) (Rhodobacter sphaeroides), this protein is Protoporphyrinogen IX oxidase.